A 341-amino-acid chain; its full sequence is Ribosomal RNA small subunit methyltransferase H (341 aa).

S-adenosyl-L-methionine contacts are provided by residues 47–49, Asp-64, Phe-91, Asp-109, and Gln-116; that span reads GGY.

It belongs to the methyltransferase superfamily. RsmH family.

The protein localises to the cytoplasm. The catalysed reaction is cytidine(1402) in 16S rRNA + S-adenosyl-L-methionine = N(4)-methylcytidine(1402) in 16S rRNA + S-adenosyl-L-homocysteine + H(+). In terms of biological role, specifically methylates the N4 position of cytidine in position 1402 (C1402) of 16S rRNA. This chain is Ribosomal RNA small subunit methyltransferase H, found in Rhizobium leguminosarum bv. trifolii (strain WSM2304).